Consider the following 107-residue polypeptide: UPF0145 protein YbjQ (107 aa).

This sequence belongs to the UPF0145 family.

The polypeptide is UPF0145 protein YbjQ (Escherichia coli O139:H28 (strain E24377A / ETEC)).